We begin with the raw amino-acid sequence, 397 residues long: Tryptophan synthase beta chain 1 (397 aa).

N6-(pyridoxal phosphate)lysine is present on Lys90.

This sequence belongs to the TrpB family. Tetramer of two alpha and two beta chains. Pyridoxal 5'-phosphate serves as cofactor.

It carries out the reaction (1S,2R)-1-C-(indol-3-yl)glycerol 3-phosphate + L-serine = D-glyceraldehyde 3-phosphate + L-tryptophan + H2O. The protein operates within amino-acid biosynthesis; L-tryptophan biosynthesis; L-tryptophan from chorismate: step 5/5. The beta subunit is responsible for the synthesis of L-tryptophan from indole and L-serine. The sequence is that of Tryptophan synthase beta chain 1 (trpB1) from Aquifex aeolicus (strain VF5).